A 416-amino-acid polypeptide reads, in one-letter code: UDP-N-acetylmuramoylalanine--D-glutamate ligase (416 aa).

104–110 (GSNGKST) contributes to the ATP binding site.

Belongs to the MurCDEF family.

The protein localises to the cytoplasm. The catalysed reaction is UDP-N-acetyl-alpha-D-muramoyl-L-alanine + D-glutamate + ATP = UDP-N-acetyl-alpha-D-muramoyl-L-alanyl-D-glutamate + ADP + phosphate + H(+). It functions in the pathway cell wall biogenesis; peptidoglycan biosynthesis. In terms of biological role, cell wall formation. Catalyzes the addition of glutamate to the nucleotide precursor UDP-N-acetylmuramoyl-L-alanine (UMA). This is UDP-N-acetylmuramoylalanine--D-glutamate ligase from Francisella tularensis subsp. tularensis (strain FSC 198).